Reading from the N-terminus, the 395-residue chain is Mitogen-activated protein kinase 6 (395 aa).

A disordered region spans residues 1–35 (MDGGSGQPAADTEMTEAPGGFPAAAPSPQMPGIEN). Residues 17 to 27 (APGGFPAAAPS) show a composition bias toward low complexity. Positions 63–348 (KPPIMPIGKG…VLDALAHPYL (286 aa)) constitute a Protein kinase domain. Residues 69–77 (IGKGAYGIV) and Lys92 contribute to the ATP site. Residue Asp189 is the Proton acceptor of the active site. Phosphothreonine is present on Thr221. The short motif at 221–223 (TEY) is the TXY element. Tyr223 is modified (phosphotyrosine). Thr226 is subject to Phosphothreonine.

This sequence belongs to the protein kinase superfamily. CMGC Ser/Thr protein kinase family. MAP kinase subfamily. As to quaternary structure, interacts with MEKK1, MKK1 and MKK2. May form a ternary complex with MEKK1 and MKK1 or MKK2. Interacts with NDPK2, AP2C1, MKP1 and PTP1. Interacts with DSPTP1B/MKP2, especially during HR-like responses triggered by fungal elicitors. Interacts with MKK4, MKK5 and MKK6. Binds to LIP5. Interacts with VQ4 and IKU1/VQ14. Interacts with RACK1A, RACK1B and RACK1C. Interacts with PTP1. Interacts with FLZ9. Binds to BASL and YDA. In terms of processing, dually phosphorylated on Thr-221 and Tyr-223, which activates the enzyme. Dephosphorylated by DSPTP1B/MKP2.

The protein localises to the cytoplasm. The protein resides in the nucleus. Its subcellular location is the cell cortex. The catalysed reaction is L-seryl-[protein] + ATP = O-phospho-L-seryl-[protein] + ADP + H(+). The enzyme catalyses L-threonyl-[protein] + ATP = O-phospho-L-threonyl-[protein] + ADP + H(+). With respect to regulation, activated by threonine and tyrosine phosphorylation. Activated by the MAP kinase kinases MKK2, MKK3, MKK4, MKK5, MKK7 and MKK9. Activated in response to touch, wounding, low temperature, low humidity, salt stress, hydrogen peroxide, ozone, ACC (an ethylene precursor), jasmonic acid (JA), mastoparan and UVC. Activated in response to elicitors: oligogalacturonides, hexameric chitin fragments, fungal xylanase, and the bacterial flagellin and harpin. Activated upon Pseudomonas syringae pv. tomato DC3000 infection. Repressed by the protein phosphatase 2C AP2C1 and the protein-tyrosine-phosphatases MKP1 and PTP1. Repressed by DSPTP1B/MKP2-mediated dephosphorylation. Activated by polarized BASL. Triggered by MKKK20 in response to various abiotic stresses, including osmotic stress, cold and reactive oxygen species (ROS). Activated by MKK5 in response to abscisic acid (ABA). Mitogen-activated protein kinase (MAPK) which regulates abscisic acid (ABA) responses in a MAPKKK20-MKK5-MPK6 cascade involved in root growth (e.g. root cell division and elongation) and stomatal response. Involved in oxidative stress-mediated signaling cascade (such as ozone). Involved in the innate immune MAP kinase signaling cascade (MEKK1, MKK4/MKK5 and MPK3/MPK6) downstream of bacterial flagellin receptor FLS2. May be involved in hypersensitive response (HR)-mediated signaling cascade by modulating LIP5 phosphorylation and subsequent multivesicular bodies (MVBs) trafficking. May phosphorylate regulators of WRKY transcription factors. Phosphorylates 1-aminocyclopropane-1-carboxylic acid synthases (ACS2 and ACS6) and may be involved in the regulation of bacterial elicitor flagellin-induced ethylene production. Regulates locally gene-mediated and basal resistance response to certain pathogens. May be involved in the cold and salinity stress-mediated MAP kinase signaling cascade (MEKK1, MKK1/MKK2 and MPK4/MPK6). MKK1-MPK6 module mediates abscisic acid (ABA)-dependent CAT1 expression with H(2)O(2) production and response to drought and salt stress. MKK1-MPK6 module is also involved in sugar signaling during the process of seed germination. MKK3-MPK6 module plays an important role in the jasmonate signal transduction pathway through the negative regulation of MYC2/JIN1 expression. MKK9-MPK3/MPK6 module phosphorylates and activates EIN3, leading to the promotion of EIN3-mediated transcription in ethylene signaling. MPK3/MPK6 cascade regulates camalexin synthesis through transcriptional regulation of the biosynthetic genes after pathogen infection. MKK9-MPK6 module positively regulates leaf senescence. YDA-MKK4/MKK5-MPK3/MPK6 module regulates stomatal cell fate before the guard mother cell (GMC) is specified. When activated, reinforces the feedback loop by phosphorylating BASL, and inhibits stomatal fate by phosphorylating SPCH. This MAPK cascade also functions downstream of the ER receptor in regulating coordinated local cell proliferation, which shapes the morphology of plant organs. The sequence is that of Mitogen-activated protein kinase 6 from Arabidopsis thaliana (Mouse-ear cress).